The primary structure comprises 453 residues: tRNA modification GTPase MnmE (453 aa).

Arg22, Glu79, and Lys119 together coordinate (6S)-5-formyl-5,6,7,8-tetrahydrofolate. The TrmE-type G domain occupies Gly215–Gly376. Asn225 contributes to the K(+) binding site. Residues Asn225–Ser230, Thr244–Thr250, Asp269–Gly272, and Asn334–Asp337 contribute to the GTP site. Ser229 is a Mg(2+) binding site. K(+) contacts are provided by Thr244, Ile246, and Thr249. Thr250 serves as a coordination point for Mg(2+). Residue Lys453 coordinates (6S)-5-formyl-5,6,7,8-tetrahydrofolate.

The protein belongs to the TRAFAC class TrmE-Era-EngA-EngB-Septin-like GTPase superfamily. TrmE GTPase family. Homodimer. Heterotetramer of two MnmE and two MnmG subunits. The cofactor is K(+).

It localises to the cytoplasm. In terms of biological role, exhibits a very high intrinsic GTPase hydrolysis rate. Involved in the addition of a carboxymethylaminomethyl (cmnm) group at the wobble position (U34) of certain tRNAs, forming tRNA-cmnm(5)s(2)U34. The chain is tRNA modification GTPase MnmE from Aeromonas salmonicida (strain A449).